A 95-amino-acid chain; its full sequence is uncharacterized protein (95 aa).

This is an uncharacterized protein from Acidianus hospitalis (AFV-1).